Reading from the N-terminus, the 468-residue chain is Dihydrolipoyl dehydrogenase (468 aa).

Residues 39–47 (EKGNLGGVC), Lys-56, and Ala-119 each bind FAD. Cys-47 and Cys-52 are joined by a disulfide. Residues 183 to 187 (GGGYI), Glu-206, and 271 to 274 (TVGR) each bind NAD(+). FAD contacts are provided by Asp-314 and Ala-322. Residue His-446 is the Proton acceptor of the active site.

Belongs to the class-I pyridine nucleotide-disulfide oxidoreductase family. As to quaternary structure, homodimer. The cofactor is FAD.

It localises to the cytoplasm. The protein localises to the membrane. The catalysed reaction is N(6)-[(R)-dihydrolipoyl]-L-lysyl-[protein] + NAD(+) = N(6)-[(R)-lipoyl]-L-lysyl-[protein] + NADH + H(+). Functionally, lipoamide dehydrogenase is a component of the alpha-ketoacid dehydrogenase complexes. In Staphylococcus aureus (strain COL), this protein is Dihydrolipoyl dehydrogenase (pdhD).